The sequence spans 191 residues: UPF0149 protein VS_2635 (191 aa).

This sequence belongs to the UPF0149 family.

The polypeptide is UPF0149 protein VS_2635 (Vibrio atlanticus (strain LGP32) (Vibrio splendidus (strain Mel32))).